The chain runs to 136 residues: Nucleoside diphosphate kinase (136 aa).

Lys-10, Phe-58, Arg-86, Thr-92, Arg-104, and Asn-114 together coordinate ATP. The active-site Pros-phosphohistidine intermediate is His-117.

This sequence belongs to the NDK family. In terms of assembly, homotetramer. Requires Mg(2+) as cofactor.

The protein resides in the cytoplasm. It carries out the reaction a 2'-deoxyribonucleoside 5'-diphosphate + ATP = a 2'-deoxyribonucleoside 5'-triphosphate + ADP. It catalyses the reaction a ribonucleoside 5'-diphosphate + ATP = a ribonucleoside 5'-triphosphate + ADP. Major role in the synthesis of nucleoside triphosphates other than ATP. The ATP gamma phosphate is transferred to the NDP beta phosphate via a ping-pong mechanism, using a phosphorylated active-site intermediate. This chain is Nucleoside diphosphate kinase, found in Mycobacterium marinum (strain ATCC BAA-535 / M).